The chain runs to 340 residues: Phosphate acyltransferase (340 aa).

It belongs to the PlsX family. As to quaternary structure, homodimer. Probably interacts with PlsY.

The protein localises to the cytoplasm. The catalysed reaction is a fatty acyl-[ACP] + phosphate = an acyl phosphate + holo-[ACP]. Its pathway is lipid metabolism; phospholipid metabolism. Its function is as follows. Catalyzes the reversible formation of acyl-phosphate (acyl-PO(4)) from acyl-[acyl-carrier-protein] (acyl-ACP). This enzyme utilizes acyl-ACP as fatty acyl donor, but not acyl-CoA. The chain is Phosphate acyltransferase from Clostridioides difficile (strain 630) (Peptoclostridium difficile).